A 271-amino-acid chain; its full sequence is Acetyl-coenzyme A carboxylase carboxyl transferase subunit beta (271 aa).

Positions 21–271 (LWIQCPYCKQ…LGDLLALHTA (251 aa)) constitute a CoA carboxyltransferase N-terminal domain. Zn(2+) contacts are provided by C25, C28, C43, and C46. A C4-type zinc finger spans residues 25–46 (CPYCKQGSYRESLGNAQVCPHC).

It belongs to the AccD/PCCB family. Acetyl-CoA carboxylase is a heterohexamer composed of biotin carboxyl carrier protein (AccB), biotin carboxylase (AccC) and two subunits each of ACCase subunit alpha (AccA) and ACCase subunit beta (AccD). Requires Zn(2+) as cofactor.

The protein localises to the cytoplasm. The enzyme catalyses N(6)-carboxybiotinyl-L-lysyl-[protein] + acetyl-CoA = N(6)-biotinyl-L-lysyl-[protein] + malonyl-CoA. Its pathway is lipid metabolism; malonyl-CoA biosynthesis; malonyl-CoA from acetyl-CoA: step 1/1. Its function is as follows. Component of the acetyl coenzyme A carboxylase (ACC) complex. Biotin carboxylase (BC) catalyzes the carboxylation of biotin on its carrier protein (BCCP) and then the CO(2) group is transferred by the transcarboxylase to acetyl-CoA to form malonyl-CoA. In Lacticaseibacillus casei (strain BL23) (Lactobacillus casei), this protein is Acetyl-coenzyme A carboxylase carboxyl transferase subunit beta.